The sequence spans 141 residues: 3-hydroxyacyl-[acyl-carrier-protein] dehydratase FabZ (141 aa).

H48 is an active-site residue.

Belongs to the thioester dehydratase family. FabZ subfamily.

The protein resides in the cytoplasm. The catalysed reaction is a (3R)-hydroxyacyl-[ACP] = a (2E)-enoyl-[ACP] + H2O. Functionally, involved in unsaturated fatty acids biosynthesis. Catalyzes the dehydration of short chain beta-hydroxyacyl-ACPs and long chain saturated and unsaturated beta-hydroxyacyl-ACPs. This Bacillus subtilis (strain 168) protein is 3-hydroxyacyl-[acyl-carrier-protein] dehydratase FabZ.